A 333-amino-acid polypeptide reads, in one-letter code: EP300-interacting inhibitor of differentiation 3 (333 aa).

This sequence belongs to the NSE4 family. As to quaternary structure, component of the SMC5-SMC6 complex which consists at least of SMC5, SMC6, NSMCE2, NSMCE1, NSMCE4A or EID3 and NSMCE3; EID3 seems to be a testis-specific subunit. NSMCE1, NSMCE4A or EID3 and NSMCE3 probably form a subcomplex that bridges the head domains of the SMC5:SMC6 heterodimer. Homodimer, and heterodimer with EID2. Interacts with the C-terminal region of CREBBP. In terms of tissue distribution, highly expressed in testis.

It is found in the nucleus. The protein localises to the cytoplasm. The protein resides in the chromosome. It localises to the telomere. Functionally, tissue-specific component of the SMC5-SMC6 complex, a complex involved in repair of DNA double-strand breaks by homologous recombination. The complex may promote sister chromatid homologous recombination by recruiting the SMC1-SMC3 cohesin complex to double-strand breaks. The complex is required for telomere maintenance via recombination and mediates sumoylation of shelterin complex (telosome) components. In terms of biological role, acts as a repressor of nuclear receptor-dependent transcription possibly by interfering with CREBBP-dependent coactivation. May function as a coinhibitor of other CREBBP/EP300-dependent transcription factors. The sequence is that of EP300-interacting inhibitor of differentiation 3 from Homo sapiens (Human).